The primary structure comprises 133 residues: Small ribosomal subunit protein uS8 (133 aa).

Belongs to the universal ribosomal protein uS8 family. Part of the 30S ribosomal subunit. Contacts proteins S5 and S12.

Its function is as follows. One of the primary rRNA binding proteins, it binds directly to 16S rRNA central domain where it helps coordinate assembly of the platform of the 30S subunit. In Mycoplasma mobile (strain ATCC 43663 / 163K / NCTC 11711) (Mesomycoplasma mobile), this protein is Small ribosomal subunit protein uS8.